We begin with the raw amino-acid sequence, 444 residues long: Phosphoribosylamine--glycine ligase (444 aa).

Positions 109 to 324 (RNLFKKYEID…FLDVCFAIAE (216 aa)) constitute an ATP-grasp domain. 140-202 (MTSLGKDVVV…EEKLVGVEFT (63 aa)) is an ATP binding site. Mg(2+)-binding residues include Gln-282, Glu-294, and Asn-296. Mn(2+) is bound by residues Gln-282, Glu-294, and Asn-296.

It belongs to the GARS family. Requires Mg(2+) as cofactor. The cofactor is Mn(2+).

The enzyme catalyses 5-phospho-beta-D-ribosylamine + glycine + ATP = N(1)-(5-phospho-beta-D-ribosyl)glycinamide + ADP + phosphate + H(+). It participates in purine metabolism; IMP biosynthesis via de novo pathway; N(1)-(5-phospho-D-ribosyl)glycinamide from 5-phospho-alpha-D-ribose 1-diphosphate: step 2/2. The polypeptide is Phosphoribosylamine--glycine ligase (Methanococcus maripaludis (strain C7 / ATCC BAA-1331)).